A 475-amino-acid chain; its full sequence is 1,3-beta-glucanosyltransferase gel2 (475 aa).

A signal peptide spans 1–21; sequence MLPTYVRLFTAVCALATTASA. Residues C69 and C98 are joined by a disulfide bond. Positions 87, 159, 160, and 201 each coordinate (1,3-beta-D-glucosyl)n. The active-site Proton donor is the E160. Intrachain disulfides connect C215/C350 and C234/C265. N236 carries an N-linked (GlcNAc...) asparagine glycan. The Nucleophile role is filled by E262. Residue Y294 coordinates (1,3-beta-D-glucosyl)n. N-linked (GlcNAc...) asparagine glycosylation is found at N311, N339, and N357. Positions 420-451 are disordered; it reads GESNTPGAHSSGSTSGSSSSGGSSSSSSDKES. Low complexity predominate over residues 429-446; that stretch reads SSGSTSGSSSSGGSSSSS. S451 carries the GPI-like-anchor amidated serine lipid modification. A propeptide spans 452–475 (removed in mature form); the sequence is AAGTISVPFVGLLSAASFMAFFML.

Belongs to the glycosyl hydrolase 72 family. In terms of processing, the GPI-like anchor contains a phosphoceramide lipid group.

The protein localises to the cell membrane. Splits internally a 1,3-beta-glucan molecule and transfers the newly generated reducing end (the donor) to the non-reducing end of another 1,3-beta-glucan molecule (the acceptor) forming a 1,3-beta linkage, resulting in the elongation of 1,3-beta-glucan chains in the cell wall. Involved in cell wall morphogenesis. The protein is 1,3-beta-glucanosyltransferase gel2 (gel2) of Aspergillus fumigatus (strain CBS 144.89 / FGSC A1163 / CEA10) (Neosartorya fumigata).